Consider the following 110-residue polypeptide: MIRKRQSGSNKSVSSGNNQEVTRVRTPRKDRNEVLATVASLLGSKRVTLQCMDGVVRMGRIPGSKNKKMWVREGDVVIANPWEIQDSKADVIWKYTKPQVDWLERKGYLN.

Residues 1–29 form a disordered region; the sequence is MIRKRQSGSNKSVSSGNNQEVTRVRTPRK. Positions 7 to 18 are enriched in low complexity; that stretch reads SGSNKSVSSGNN. The 75-residue stretch at 22–96 folds into the S1-like domain; it reads TRVRTPRKDR…SKADVIWKYT (75 aa).

The protein belongs to the eIF-1A family.

Its function is as follows. Seems to be required for maximal rate of protein biosynthesis. Enhances ribosome dissociation into subunits and stabilizes the binding of the initiator Met-tRNA(I) to 40 S ribosomal subunits. The chain is Translation initiation factor 1A 3 (eIF1A3) from Methanosarcina acetivorans (strain ATCC 35395 / DSM 2834 / JCM 12185 / C2A).